Reading from the N-terminus, the 121-residue chain is SLFELGKMILQETGKNPAKSYGAYGCYCGVLGRGKPKDATDRCCYVHKCCYKKLTGCDNKKDRYSYSWKDKTIVCGENNPCLKELCECDKAVAICLRENLNTYNKKYRYHLKPLCKKADAC.

Cystine bridges form between Cys-26–Cys-115, Cys-28–Cys-44, Cys-43–Cys-95, Cys-49–Cys-121, Cys-50–Cys-88, Cys-57–Cys-81, and Cys-75–Cys-86. The tract at residues 105 to 117 (KKYRYHLKPLCKK) is important for membrane-damaging activities in eukaryotes and bacteria; heparin-binding.

Belongs to the phospholipase A2 family. Group II subfamily. K49 sub-subfamily. Homodimer; non-covalently linked (probable alternative/compact dimer conformation in solution). In terms of tissue distribution, expressed by the venom gland.

Its subcellular location is the secreted. Its function is as follows. Snake venom phospholipase A2 homolog that lacks enzymatic activity. Is myotoxic and displays edema-inducing activities in mouse paw. Also displays cytotoxic activity against myotubes. A model of myotoxic mechanism has been proposed: an apo Lys49-PLA2 is activated by the entrance of a hydrophobic molecule (e.g. fatty acid) at the hydrophobic channel of the protein leading to a reorientation of a monomer. This reorientation causes a transition between 'inactive' to 'active' states, causing alignment of C-terminal and membrane-docking sites (MDoS) side-by-side and putting the membrane-disruption sites (MDiS) in the same plane, exposed to solvent and in a symmetric position for both monomers. The MDoS region stabilizes the toxin on membrane by the interaction of charged residues with phospholipid head groups. Subsequently, the MDiS region destabilizes the membrane with penetration of hydrophobic residues. This insertion causes a disorganization of the membrane, allowing an uncontrolled influx of ions (i.e. calcium and sodium), and eventually triggering irreversible intracellular alterations and cell death. This chain is Basic phospholipase A2 homolog 2, found in Bothrops brazili (Brazil's lancehead).